A 152-amino-acid polypeptide reads, in one-letter code: Acidic phospholipase A2 (152 aa).

The signal sequence occupies residues 1–21 (MNPAHLLVLSAVCVSLLGASS). Residues 22-27 (IPPQPL) constitute a propeptide that is removed on maturation. Cystine bridges form between C38/C104, C54/C151, C56/C72, C71/C132, C78/C125, C88/C118, and C111/C123. 3 residues coordinate Ca(2+): Y55, G57, and G59. The active site involves H75. D76 lines the Ca(2+) pocket. D126 is a catalytic residue.

It belongs to the phospholipase A2 family. Group I subfamily. D49 sub-subfamily. Ca(2+) serves as cofactor. In terms of tissue distribution, expressed by the venom gland.

Its subcellular location is the secreted. It carries out the reaction a 1,2-diacyl-sn-glycero-3-phosphocholine + H2O = a 1-acyl-sn-glycero-3-phosphocholine + a fatty acid + H(+). In terms of biological role, PLA2 catalyzes the calcium-dependent hydrolysis of the 2-acyl groups in 3-sn-phosphoglycerides. The protein is Acidic phospholipase A2 of Ophiophagus hannah (King cobra).